Consider the following 782-residue polypeptide: cGMP-specific 3',5'-cyclic phosphodiesterase gamma (782 aa).

At Met1–Tyr69 the chain is on the cytoplasmic side. Residues Val70 to Gly90 form a helical membrane-spanning segment. Topologically, residues Asn91–Ser97 are extracellular. A helical transmembrane segment spans residues Val98–Leu118. Residues Thr119–Glu135 are Cytoplasmic-facing. The chain crosses the membrane as a helical span at residues Ile136 to Phe156. Topologically, residues Asn157–Lys181 are extracellular. Residues Ile182 to Pro202 form a helical membrane-spanning segment. Residues Cys203–Ser208 lie on the Cytoplasmic side of the membrane. Residues Cys209–Ile229 traverse the membrane as a helical segment. Residues Thr230–Asn239 lie on the Extracellular side of the membrane. A helical transmembrane segment spans residues Ile240–Ile260. Residues Glu261–Leu782 lie on the Cytoplasmic side of the membrane. Residues Gly376–Gly396 form a disordered region. Residues Pro381–Val390 are compositionally biased toward acidic residues. A PDEase domain is found at Tyr423 to Glu751. The Proton donor role is filled by His504. His504–His508 contacts a nucleoside 3',5'-cyclic phosphate. Residues His508, His544, Asp545, and Asp654 each coordinate a divalent metal cation. The a nucleoside 3',5'-cyclic phosphate site is built by Asp545, Asp654, and Gln706.

This sequence belongs to the cyclic nucleotide phosphodiesterase family. A divalent metal cation serves as cofactor.

The protein localises to the membrane. Its subcellular location is the endoplasmic reticulum membrane. The enzyme catalyses 3',5'-cyclic GMP + H2O = GMP + H(+). It functions in the pathway purine metabolism; 3',5'-cyclic GMP degradation; GMP from 3',5'-cyclic GMP: step 1/1. Functionally, specifically hydrolyzes the second messenger cGMP, which is a key regulator of many important physiological processes. Probably by regulating cGMP levels, required for sporozoite motility and invasion of the mosquito salivary glands. The sequence is that of cGMP-specific 3',5'-cyclic phosphodiesterase gamma from Plasmodium yoelii.